The primary structure comprises 583 residues: Putative amidase C869.01 (583 aa).

A signal peptide spans 1-19; that stretch reads MKLQLLFLTLAQLAKHGLA. Catalysis depends on charge relay system residues lysine 141 and serine 222. Serine 246 acts as the Acyl-ester intermediate in catalysis.

It belongs to the amidase family.

The protein localises to the cytoplasm. The enzyme catalyses a monocarboxylic acid amide + H2O = a monocarboxylate + NH4(+). The chain is Putative amidase C869.01 from Schizosaccharomyces pombe (strain 972 / ATCC 24843) (Fission yeast).